Reading from the N-terminus, the 311-residue chain is Ornithine carbamoyltransferase (311 aa).

Residues serine 57–threonine 60, glutamine 84, arginine 108, and histidine 135–glutamine 138 each bind carbamoyl phosphate. Residues asparagine 166, aspartate 230, and serine 234–methionine 235 contribute to the L-ornithine site. Carbamoyl phosphate-binding positions include cysteine 270–leucine 271 and arginine 298.

This sequence belongs to the aspartate/ornithine carbamoyltransferase superfamily. OTCase family.

It is found in the cytoplasm. The catalysed reaction is carbamoyl phosphate + L-ornithine = L-citrulline + phosphate + H(+). The protein operates within amino-acid biosynthesis; L-arginine biosynthesis; L-arginine from L-ornithine and carbamoyl phosphate: step 1/3. In terms of biological role, reversibly catalyzes the transfer of the carbamoyl group from carbamoyl phosphate (CP) to the N(epsilon) atom of ornithine (ORN) to produce L-citrulline. This is Ornithine carbamoyltransferase from Carboxydothermus hydrogenoformans (strain ATCC BAA-161 / DSM 6008 / Z-2901).